Reading from the N-terminus, the 344-residue chain is Holliday junction branch migration complex subunit RuvB (344 aa).

A compositionally biased stretch (low complexity) spans 1–10 (MAIQSSSSGS). Residues 1 to 37 (MAIQSSSSGSKPPAPKRLVAPEATAAEGDGGRDEGLR) form a disordered region. Residues 13 to 197 (PAPKRLVAPE…FGLIQRLEFY (185 aa)) form a large ATPase domain (RuvB-L) region. Residues L36, R37, G78, K81, T82, T83, 144–146 (EDF), R187, Y197, and R234 contribute to the ATP site. Position 82 (T82) interacts with Mg(2+). The segment at 198 to 268 (SCSDLEAIVS…VVVEALAMHR (71 aa)) is small ATPAse domain (RuvB-S). The interval 271–344 (GRGLDPSDRR…DAGRAHLEAA (74 aa)) is head domain (RuvB-H). The DNA site is built by R326 and R331.

This sequence belongs to the RuvB family. In terms of assembly, homohexamer. Forms an RuvA(8)-RuvB(12)-Holliday junction (HJ) complex. HJ DNA is sandwiched between 2 RuvA tetramers; dsDNA enters through RuvA and exits via RuvB. An RuvB hexamer assembles on each DNA strand where it exits the tetramer. Each RuvB hexamer is contacted by two RuvA subunits (via domain III) on 2 adjacent RuvB subunits; this complex drives branch migration. In the full resolvosome a probable DNA-RuvA(4)-RuvB(12)-RuvC(2) complex forms which resolves the HJ.

It is found in the cytoplasm. The catalysed reaction is ATP + H2O = ADP + phosphate + H(+). Its function is as follows. The RuvA-RuvB-RuvC complex processes Holliday junction (HJ) DNA during genetic recombination and DNA repair, while the RuvA-RuvB complex plays an important role in the rescue of blocked DNA replication forks via replication fork reversal (RFR). RuvA specifically binds to HJ cruciform DNA, conferring on it an open structure. The RuvB hexamer acts as an ATP-dependent pump, pulling dsDNA into and through the RuvAB complex. RuvB forms 2 homohexamers on either side of HJ DNA bound by 1 or 2 RuvA tetramers; 4 subunits per hexamer contact DNA at a time. Coordinated motions by a converter formed by DNA-disengaged RuvB subunits stimulates ATP hydrolysis and nucleotide exchange. Immobilization of the converter enables RuvB to convert the ATP-contained energy into a lever motion, pulling 2 nucleotides of DNA out of the RuvA tetramer per ATP hydrolyzed, thus driving DNA branch migration. The RuvB motors rotate together with the DNA substrate, which together with the progressing nucleotide cycle form the mechanistic basis for DNA recombination by continuous HJ branch migration. Branch migration allows RuvC to scan DNA until it finds its consensus sequence, where it cleaves and resolves cruciform DNA. The chain is Holliday junction branch migration complex subunit RuvB from Synechococcus sp. (strain RCC307).